The chain runs to 119 residues: Ribonuclease P protein component (119 aa).

The protein belongs to the RnpA family. In terms of assembly, consists of a catalytic RNA component (M1 or rnpB) and a protein subunit.

It carries out the reaction Endonucleolytic cleavage of RNA, removing 5'-extranucleotides from tRNA precursor.. RNaseP catalyzes the removal of the 5'-leader sequence from pre-tRNA to produce the mature 5'-terminus. It can also cleave other RNA substrates such as 4.5S RNA. The protein component plays an auxiliary but essential role in vivo by binding to the 5'-leader sequence and broadening the substrate specificity of the ribozyme. The chain is Ribonuclease P protein component from Erwinia tasmaniensis (strain DSM 17950 / CFBP 7177 / CIP 109463 / NCPPB 4357 / Et1/99).